Consider the following 166-residue polypeptide: Regulator of ribonuclease activity A (166 aa).

The protein belongs to the RraA family. As to quaternary structure, homotrimer. Binds to both RNA-binding sites in the C-terminal region of Rne and to RhlB.

The protein resides in the cytoplasm. Functionally, globally modulates RNA abundance by binding to RNase E (Rne) and regulating its endonucleolytic activity. Can modulate Rne action in a substrate-dependent manner by altering the composition of the degradosome. Modulates RNA-binding and helicase activities of the degradosome. This is Regulator of ribonuclease activity A from Actinobacillus succinogenes (strain ATCC 55618 / DSM 22257 / CCUG 43843 / 130Z).